Here is a 577-residue protein sequence, read N- to C-terminus: Arginine--tRNA ligase (577 aa).

Residues 122–132 (PNVAKEMHVGH) carry the 'HIGH' region motif.

It belongs to the class-I aminoacyl-tRNA synthetase family. In terms of assembly, monomer.

The protein resides in the cytoplasm. The catalysed reaction is tRNA(Arg) + L-arginine + ATP = L-arginyl-tRNA(Arg) + AMP + diphosphate. This chain is Arginine--tRNA ligase, found in Salmonella dublin (strain CT_02021853).